The following is a 500-amino-acid chain: ERAD-associated E3 ubiquitin-protein ligase HRD1 (500 aa).

The Cytoplasmic portion of the chain corresponds to 1-3; that stretch reads MIR. A helical transmembrane segment spans residues 4 to 24; it reads LQTYAAFSLMATATAVYYAFS. Over 25–40 the chain is Lumenal; it reads SREQFYPAMVYLSTSK. A helical membrane pass occupies residues 41 to 61; that stretch reads ICFVLLLNTGLVAMCVAWQLV. Over 62–98 the chain is Cytoplasmic; it reads KRLFLGTLREAEVERLNEQAWREVVEILFAVTIFRQD. The helical transmembrane segment at 99-119 threads the bilayer; the sequence is FSVSFLAMVAALLLVKALHWL. Residues 120-135 lie on the Lumenal side of the membrane; the sequence is AQKRVEYIETTPSVPM. Residues 136-156 form a helical membrane-spanning segment; sequence LSHARIVSFMLFLLVVDCLFL. At 157-170 the chain is on the cytoplasmic side; sequence SNSLRSLIHKREAS. Residues 171-191 traverse the membrane as a helical segment; that stretch reads VAIFFSFEYMILATSTVSTFV. The Lumenal portion of the chain corresponds to 192–225; the sequence is KYIFYVSDMLMEGQWEKKAVYTFYLELISDLVHL. A helical membrane pass occupies residues 226-246; it reads SLYMLFFIAIFLNYGVPLHLI. Over 247–500 the chain is Cytoplasmic; it reads RELYETFRNF…NENGEHTKSD (254 aa). An RING-type; atypical zinc finger spans residues 292-330; sequence CIICREEMTTAKKLLCGHLFHVHCLRSWLERQHTCPTCR. Disordered regions lie at residues 337 to 375 and 398 to 438; these read DNGR…SRRQ and NNLN…SAPT. Residues 348–358 are compositionally biased toward low complexity; it reads VHPGVQPVPGN. Residues 398 to 426 show a composition bias toward polar residues; that stretch reads NNLNRYSTPPQSTSNGPQSGEASTSNQSP.

Belongs to the HRD1 family.

The protein resides in the endoplasmic reticulum membrane. It carries out the reaction S-ubiquitinyl-[E2 ubiquitin-conjugating enzyme]-L-cysteine + [acceptor protein]-L-lysine = [E2 ubiquitin-conjugating enzyme]-L-cysteine + N(6)-ubiquitinyl-[acceptor protein]-L-lysine.. Its pathway is protein modification; protein ubiquitination. Probable component of the HRD1 ubiquitin ligase complex that mediates the rapid degradation of misfolded endoplasmic reticulum (ER) proteins, a process called ER-associated degradation (ERAD). The protein is ERAD-associated E3 ubiquitin-protein ligase HRD1 of Oryza sativa subsp. japonica (Rice).